Reading from the N-terminus, the 100-residue chain is Urease subunit gamma (100 aa).

This sequence belongs to the urease gamma subunit family. In terms of assembly, heterotrimer of UreA (gamma), UreB (beta) and UreC (alpha) subunits. Three heterotrimers associate to form the active enzyme.

Its subcellular location is the cytoplasm. The catalysed reaction is urea + 2 H2O + H(+) = hydrogencarbonate + 2 NH4(+). It functions in the pathway nitrogen metabolism; urea degradation; CO(2) and NH(3) from urea (urease route): step 1/1. The chain is Urease subunit gamma from Saccharopolyspora erythraea (strain ATCC 11635 / DSM 40517 / JCM 4748 / NBRC 13426 / NCIMB 8594 / NRRL 2338).